Consider the following 602-residue polypeptide: Glutamine--fructose-6-phosphate aminotransferase [isomerizing] (602 aa).

The Nucleophile; for GATase activity role is filled by Cys2. The 216-residue stretch at Cys2–Asp217 folds into the Glutamine amidotransferase type-2 domain. A disordered region spans residues Ile67–Arg87. The span at Lys77 to Arg87 shows a compositional bias: basic and acidic residues. 2 SIS domains span residues Ile283–Asn422 and Val455–Pro592. The active-site For Fru-6P isomerization activity is the Lys597.

Homodimer.

The protein resides in the cytoplasm. It carries out the reaction D-fructose 6-phosphate + L-glutamine = D-glucosamine 6-phosphate + L-glutamate. In terms of biological role, catalyzes the first step in hexosamine metabolism, converting fructose-6P into glucosamine-6P using glutamine as a nitrogen source. In Streptococcus pneumoniae serotype 4 (strain ATCC BAA-334 / TIGR4), this protein is Glutamine--fructose-6-phosphate aminotransferase [isomerizing].